The chain runs to 330 residues: Mas-related G-protein coupled receptor member X2 (330 aa).

Topologically, residues 1–33 (MDPTTPAWGTESTTMNGNDQALPLLCGKETLIL) are extracellular. A helical transmembrane segment spans residues 34-54 (VLLILFIALVGLVGNAFVLWL). The Cytoplasmic segment spans residues 55–63 (LGFRMRRNA). Residues 64–84 (FSVYVLSLAGADFLFLCFPMI) traverse the membrane as a helical segment. The Extracellular portion of the chain corresponds to 85 to 96 (NCLEYLINFFHS). Residues 97–117 (ISINFPSFFTTVMTCAYLAGL) form a helical membrane-spanning segment. At 118-144 (SMLSAISTERCLSVLWPIWYRCRRPRH) the chain is on the cytoplasmic side. A helical membrane pass occupies residues 145–165 (LSAVLCVLLWALSLLLSILEG). The Extracellular segment spans residues 166-184 (KFCGLLFSDGDSGWCQTFD). The chain crosses the membrane as a helical span at residues 185–205 (FITAAWLMFLFVVLCGSSLAL). Over 206-228 (LVRILCGSQGLPLTRLYLTILLT) the chain is Cytoplasmic. The chain crosses the membrane as a helical span at residues 229–249 (VLIFLLCGLPFGIQWFLILWI). Over 250–264 (WKNSDVLFCHIHPVS) the chain is Extracellular. Residues 265–285 (VVLSSFNSSANPIIYFFVGSF) traverse the membrane as a helical segment. Over 286 to 330 (RKQWRLRQPVLKLALQRALQDTAEVDHSEGCFSQGTLEMSGSSLV) the chain is Cytoplasmic.

The protein belongs to the G-protein coupled receptor 1 family. Mas subfamily.

The protein localises to the cell membrane. In terms of biological role, mast cell-specific receptor for basic secretagogues, i.e. cationic amphiphilic drugs, as well as endo- or exogenous peptides, consisting of a basic head group and a hydrophobic core. Recognizes and binds small molecules containing a cyclized tetrahydroisoquinoline (THIQ), such as non-steroidal neuromuscular blocking drugs (NMBDs), including tubocurarine and atracurium. In response to these compounds, mediates pseudo-allergic reactions characterized by histamine release, inflammation and airway contraction. In Rhinopithecus bieti (Black snub-nosed monkey), this protein is Mas-related G-protein coupled receptor member X2 (MRGPRX2).